A 363-amino-acid polypeptide reads, in one-letter code: Cytochrome c oxidase subunit 2 (363 aa).

A disordered region spans residues 1–23 (MTPRGPGRLQRLSQCRPQRGSGG). The first 41 residues, 1-41 (MTPRGPGRLQRLSQCRPQRGSGGPARGLRQLALAAMLGALA), serve as a signal peptide directing secretion. A run of 2 helical transmembrane segments spans residues 71 to 91 (LWIG…GLIF) and 118 to 138 (LVLT…TVVV). The Cu cation site is built by histidine 254, cysteine 295, cysteine 299, and histidine 303.

The protein belongs to the cytochrome c oxidase subunit 2 family. Requires Cu cation as cofactor. Heme is required as a cofactor.

The protein localises to the cell membrane. The enzyme catalyses 4 Fe(II)-[cytochrome c] + O2 + 8 H(+)(in) = 4 Fe(III)-[cytochrome c] + 2 H2O + 4 H(+)(out). Subunits I and II form the functional core of the enzyme complex. Electrons originating in cytochrome c are transferred via heme a and Cu(A) to the binuclear center formed by heme a3 and Cu(B). The polypeptide is Cytochrome c oxidase subunit 2 (ctaC) (Mycobacterium bovis (strain ATCC BAA-935 / AF2122/97)).